A 514-amino-acid chain; its full sequence is Probable endopolygalacturonase D (514 aa).

A signal peptide spans 1–16; the sequence is MKRCALLTPLLPLALA. Residues 134–166 form a disordered region; sequence IKSSSPGPSSSFAAAATTEAPTSTRASPYTPYT. Low complexity predominate over residues 136–166; sequence SSSPGPSSSFAAAATTEAPTSTRASPYTPYT. Cys-173 and Cys-188 are disulfide-bonded. A glycan (N-linked (GlcNAc...) asparagine) is linked at Asn-240. PbH1 repeat units follow at residues 280 to 302, 303 to 341, 342 to 363, 364 to 384, 393 to 414, 422 to 444, and 456 to 500; these read VYNS…DIEN, TESL…DIKS, STDL…AITS, GTNI…SIGS, VDGV…RIKT, VSNI…VVQQ, and SNGV…SITG. Residues 312-335 form a disordered region; it reads TLDNSAGDEPNDSSDGDPAAHNSD. Residue Asn-322 is glycosylated (N-linked (GlcNAc...) asparagine). Residue Asp-356 is the Proton donor of the active site. Residues Cys-358 and Cys-374 are joined by a disulfide bond. N-linked (GlcNAc...) asparagine glycosylation occurs at Asn-366. Residue His-378 is part of the active site. A glycan (N-linked (GlcNAc...) asparagine) is linked at Asn-429. Cys-483 and Cys-488 are oxidised to a cystine. Asn-490 carries an N-linked (GlcNAc...) asparagine glycan. A disulfide bridge links Cys-506 with Cys-513.

Belongs to the glycosyl hydrolase 28 family.

Its subcellular location is the secreted. The catalysed reaction is (1,4-alpha-D-galacturonosyl)n+m + H2O = (1,4-alpha-D-galacturonosyl)n + (1,4-alpha-D-galacturonosyl)m.. Involved in maceration and soft-rotting of plant tissue. Hydrolyzes the 1,4-alpha glycosidic bonds of de-esterified pectate in the smooth region of the plant cell wall. The chain is Probable endopolygalacturonase D (pgaD) from Emericella nidulans (strain FGSC A4 / ATCC 38163 / CBS 112.46 / NRRL 194 / M139) (Aspergillus nidulans).